Here is a 559-residue protein sequence, read N- to C-terminus: Protein pp71 (559 aa).

The residue at position 218 (C218) is an S-nitrosocysteine; by host. Phosphothreonine is present on T223. Disordered regions lie at residues 404–440 and 530–559; these read EFLPQSPGLPPTEEEEEEEEEDDEDDLSSTPTPTPLS and SSTLRSVPAPRPSPISTASTSSTPRSRPRI. Residues 415-430 are compositionally biased toward acidic residues; sequence TEEEEEEEEEDDEDDL. Low complexity-rich tracts occupy residues 431 to 440 and 543 to 559; these read SSTPTPTPLS and PISTASTSSTPRSRPRI.

This sequence belongs to the herpesviridae pp71 family. Interacts with the host protein DAXX; this interaction takes place at ND10 and induces the reversal of DAXX-mediated repression of viral transcription. Interacts with UL35. Interacts with host TMEM173/STING1; this interaction inhibits the cGAS/STING pathway. Interacts with host RB1; this interaction mediates RB1 proteasomal degradation. Post-translationally, S-nitrosylation limits ability to undermine the cGAS/STING antiviral pathway.

Its subcellular location is the virion tegument. The protein localises to the host nucleus. The protein resides in the host endoplasmic reticulum. Stimulates viral immediate-early (IE) transcription. Plays a role in the inhibition of the host innate repsonse by targeting STING1 and thus the cGAS-STING pathway. Also counteracts host DAXX-mediated repression of viral transcription. Displaces a DAXX-binding protein, ATRX, from nuclear domain 10 sites (ND10) shortly after infection. Increases the basal level of SUMOylated DAXX in infected cells. Stimulates quiescent cells to re-enter the cell cycle, proceed through G1 and enter the S phase. Interacts with hypophosphorylated forms of RB1 and induces their degradation by the proteasome without involving ubiquitin conjugation. The chain is Protein pp71 (UL82) from Human cytomegalovirus (strain AD169) (HHV-5).